Reading from the N-terminus, the 534-residue chain is CTP synthase (534 aa).

The interval 1–265 is amidoligase domain; that stretch reads MKYIIVTGGV…SNYLLKKLIL (265 aa). CTP is bound at residue S12. A UTP-binding site is contributed by S12. 13–18 provides a ligand contact to ATP; it reads GLGKGI. Y53 lines the L-glutamine pocket. D70 contributes to the ATP binding site. Residues D70 and E140 each contribute to the Mg(2+) site. Residues 147-149, 186-191, and K222 each bind CTP; these read DIE and KTKPTQ. UTP contacts are provided by residues 186–191 and K222; that span reads KTKPTQ. Positions 289-530 constitute a Glutamine amidotransferase type-1 domain; that stretch reads NVAIVGKYTH…MGAMLKKSKE (242 aa). G352 provides a ligand contact to L-glutamine. The Nucleophile; for glutamine hydrolysis role is filled by C379. L-glutamine is bound by residues 380-383, E403, and R460; that span reads LGMQ. Active-site residues include H503 and E505.

It belongs to the CTP synthase family. As to quaternary structure, homotetramer.

The enzyme catalyses UTP + L-glutamine + ATP + H2O = CTP + L-glutamate + ADP + phosphate + 2 H(+). It catalyses the reaction L-glutamine + H2O = L-glutamate + NH4(+). It carries out the reaction UTP + NH4(+) + ATP = CTP + ADP + phosphate + 2 H(+). The protein operates within pyrimidine metabolism; CTP biosynthesis via de novo pathway; CTP from UDP: step 2/2. Allosterically activated by GTP, when glutamine is the substrate; GTP has no effect on the reaction when ammonia is the substrate. The allosteric effector GTP functions by stabilizing the protein conformation that binds the tetrahedral intermediate(s) formed during glutamine hydrolysis. Inhibited by the product CTP, via allosteric rather than competitive inhibition. In terms of biological role, catalyzes the ATP-dependent amination of UTP to CTP with either L-glutamine or ammonia as the source of nitrogen. Regulates intracellular CTP levels through interactions with the four ribonucleotide triphosphates. This Methanococcoides burtonii (strain DSM 6242 / NBRC 107633 / OCM 468 / ACE-M) protein is CTP synthase.